The primary structure comprises 173 residues: NADH-ubiquinone oxidoreductase chain 6 (173 aa).

5 consecutive transmembrane segments (helical) span residues 1 to 21 (MTYF…AVAS), 27 to 47 (YGVV…LSLG), 48 to 68 (ASFV…VVFV), 87 to 107 (VIGY…ISGF), and 139 to 159 (WGVG…FVVL).

It belongs to the complex I subunit 6 family.

It localises to the mitochondrion membrane. The enzyme catalyses a ubiquinone + NADH + 5 H(+)(in) = a ubiquinol + NAD(+) + 4 H(+)(out). Functionally, core subunit of the mitochondrial membrane respiratory chain NADH dehydrogenase (Complex I) that is believed to belong to the minimal assembly required for catalysis. Complex I functions in the transfer of electrons from NADH to the respiratory chain. The immediate electron acceptor for the enzyme is believed to be ubiquinone. In Brachyramphus marmoratus (Marbled murrelet), this protein is NADH-ubiquinone oxidoreductase chain 6 (MT-ND6).